Here is a 129-residue protein sequence, read N- to C-terminus: Small ribosomal subunit protein uS9 (129 aa).

This sequence belongs to the universal ribosomal protein uS9 family.

The sequence is that of Small ribosomal subunit protein uS9 (rps9) from Thermoplasma acidophilum (strain ATCC 25905 / DSM 1728 / JCM 9062 / NBRC 15155 / AMRC-C165).